An 848-amino-acid chain; its full sequence is Alanine--tRNA ligase (848 aa).

His553, His557, Cys654, and His658 together coordinate Zn(2+).

Belongs to the class-II aminoacyl-tRNA synthetase family. Zn(2+) serves as cofactor.

Its subcellular location is the cytoplasm. The catalysed reaction is tRNA(Ala) + L-alanine + ATP = L-alanyl-tRNA(Ala) + AMP + diphosphate. Functionally, catalyzes the attachment of alanine to tRNA(Ala) in a two-step reaction: alanine is first activated by ATP to form Ala-AMP and then transferred to the acceptor end of tRNA(Ala). Also edits incorrectly charged Ser-tRNA(Ala) and Gly-tRNA(Ala) via its editing domain. The protein is Alanine--tRNA ligase of Neorickettsia sennetsu (strain ATCC VR-367 / Miyayama) (Ehrlichia sennetsu).